The sequence spans 335 residues: 2-acylglycerol O-acyltransferase 2-B (335 aa).

Helical transmembrane passes span tryptophan 24 to phenylalanine 44 and tyrosine 104 to threonine 124. Asparagine 206 is a glycosylation site (N-linked (GlcNAc...) asparagine).

Belongs to the diacylglycerol acyltransferase family.

It is found in the endoplasmic reticulum membrane. The protein resides in the cytoplasm. It localises to the perinuclear region. The enzyme catalyses a 2-acylglycerol + an acyl-CoA = a 1,2-diacylglycerol + CoA. It catalyses the reaction a 2-acylglycerol + an acyl-CoA = a 1,2-diacyl-sn-glycerol + CoA. It carries out the reaction a 2-acylglycerol + an acyl-CoA = a 2,3-diacyl-sn-glycerol + CoA. The catalysed reaction is a 1-acylglycerol + an acyl-CoA = a 1,2-diacylglycerol + CoA. The enzyme catalyses a 1-acylglycerol + an acyl-CoA = a 1,3-diacylglycerol + CoA. It catalyses the reaction 1-O-alkylglycerol + an acyl-CoA = 1-O-alkyl-3-acylglycerol + CoA. It carries out the reaction an acyl-CoA + a 1,2-diacyl-sn-glycerol = a triacyl-sn-glycerol + CoA. It functions in the pathway glycerolipid metabolism; triacylglycerol biosynthesis. In terms of biological role, catalyzes the formation of diacylglycerol from 2-monoacylglycerol and fatty acyl-CoA. Its function is as follows. Involved in glycerolipid synthesis and lipid metabolism. Catalyzes the formation of diacylglycerol, the precursor of triacylglycerol, by transferring the acyl chain of a fatty acyl-CoA to a monoacylglycerol. Plays a central role in absorption of dietary fat in the small intestine by catalyzing the resynthesis of triacylglycerol in enterocytes. Has a preference toward monoacylglycerols containing unsaturated fatty acids in an order of C18:3 &gt; C18:2 &gt; C18:1 &gt; C18:0 at sn-2. Able to use 1-monoalkylglycerol (1-MAkG, 1-O-alkylglycerol) as an acyl acceptor for the synthesis of monoalkyl-monoacylglycerol (MAMAG, 1-O-alkyl-3-acylglycerol or 1-O-alkyl-2-acylglycerol) and subsequently, with lower efficiency, may add another acyl chain producing monoalkyl-diacylglycerol (MADAG, 1-O-alkyl-2,3-diacylglycerol). Possesses weak but significant activity with diacylglycerol as substrate, producing triacylglycerol (triacyl-sn-glycerol). In Xenopus laevis (African clawed frog), this protein is 2-acylglycerol O-acyltransferase 2-B (mogat2-b).